Here is a 425-residue protein sequence, read N- to C-terminus: MANKEMFEDTVEERVINEEYKIWKKNTPFLYDLVMTHALEWPSLTVQWLPDVTRPEGKDYALHWLVLGTHTSDEQNHLVVARVQVPNDDAQFDASHYDSEKGEFGGFGSVSGKIETEIKINHEGEVNRARYMPQNPCIIATKTPSADVLVFDYTKHPSKPDPSGECSPDLRLRGHQKEGYGLSWNSNLSGHLLSASDDHTVCLWDISAGPKEGKVVDAKAVFTGHSAVVEDVAWHLLHESLFGSVADDQKLMIWDTRSNTTSKPSHSVDAHTAEVNCLSFNPYSEFILATGSADKTVALWDLRNLKLKLHSFESHKDEIFQVHWSPHNETILASSGTDRRLNVWDLSKIGEEQSAEDAEDGPPELLFIHGGHTAKISDFSWNPNEPWVICSVSEDNIMQIWQMAENIYNDEEPDIPASELEAQGS.

7 WD repeats span residues 47–122 (QWLP…KINH), 128–173 (RARY…LRLR), 181–217 (GLSW…KVVD), 228–269 (VVED…HSVD), 275–312 (VNCL…LHSF), 318–369 (EIFQ…LFIH), and 376–403 (ISDF…IWQM).

Belongs to the WD repeat RBAP46/RBAP48/MSI1 family. As to quaternary structure, binds directly to helix 1 of the histone fold of histone H4, a region that is not accessible when H4 is in chromatin.

The protein localises to the nucleus. In terms of biological role, core histone-binding subunit that may target chromatin remodeling factors, histone acetyltransferases and histone deacetylases to their histone substrates in a manner that is regulated by nucleosomal DNA. Component of several complexes which regulate chromatin metabolism. The sequence is that of Histone-binding protein RBBP7 (rbbp7) from Xenopus laevis (African clawed frog).